Here is a 403-residue protein sequence, read N- to C-terminus: Acetylornithine aminotransferase (403 aa).

Residues 107–108 and Phe-140 each bind pyridoxal 5'-phosphate; that span reads GA. Arg-143 contributes to the N(2)-acetyl-L-ornithine binding site. 225–228 provides a ligand contact to pyridoxal 5'-phosphate; the sequence is DEVQ. Lys-254 is modified (N6-(pyridoxal phosphate)lysine). A N(2)-acetyl-L-ornithine-binding site is contributed by Ser-282. Thr-283 serves as a coordination point for pyridoxal 5'-phosphate.

Belongs to the class-III pyridoxal-phosphate-dependent aminotransferase family. ArgD subfamily. Homodimer. It depends on pyridoxal 5'-phosphate as a cofactor.

Its subcellular location is the cytoplasm. It catalyses the reaction N(2)-acetyl-L-ornithine + 2-oxoglutarate = N-acetyl-L-glutamate 5-semialdehyde + L-glutamate. Its pathway is amino-acid biosynthesis; L-arginine biosynthesis; N(2)-acetyl-L-ornithine from L-glutamate: step 4/4. This is Acetylornithine aminotransferase from Vibrio cholerae serotype O1 (strain ATCC 39315 / El Tor Inaba N16961).